The sequence spans 379 residues: Cytochrome b (379 aa).

Helical transmembrane passes span 34-54 (LGSLLGMCLMIQIVTGLFLTM), 78-99 (WLIRTLHANGASMFFICMYLHV), 114-134 (WMTGTIILFLVMATAFMGYVL), and 179-199 (FYTFHFVLPFIVMAMVMIHLF). Heme b is bound by residues His-84 and His-98. Heme b is bound by residues His-183 and His-197. His-202 provides a ligand contact to a ubiquinone. 4 helical membrane passes run 227 to 247 (YKDMITFIILMMILIMLCLID), 289 to 309 (LGGVIALVMSISILMIMPFYN), 321 to 341 (MNQIMFWIMVIVICLLTWIGK), and 348 to 368 (YIMTGQILTIIYFSYFLFNVH).

Belongs to the cytochrome b family. In terms of assembly, the main subunits of complex b-c1 are: cytochrome b, cytochrome c1 and the Rieske protein. It depends on heme b as a cofactor.

The protein resides in the mitochondrion inner membrane. Component of the ubiquinol-cytochrome c reductase complex (complex III or cytochrome b-c1 complex) that is part of the mitochondrial respiratory chain. The b-c1 complex mediates electron transfer from ubiquinol to cytochrome c. Contributes to the generation of a proton gradient across the mitochondrial membrane that is then used for ATP synthesis. This Locusta migratoria (Migratory locust) protein is Cytochrome b (MT-CYB).